The sequence spans 145 residues: Large ribosomal subunit protein uL15 (145 aa).

A disordered region spans residues 1–55 (MSLLKTLAPKAGSKHAPKRIGRGIGSGMGGTATKGHKGQLARTGGTVRRGFEGGQ). Basic residues predominate over residues 12-21 (GSKHAPKRIG). The segment covering 22-32 (RGIGSGMGGTA) has biased composition (gly residues).

It belongs to the universal ribosomal protein uL15 family. As to quaternary structure, part of the 50S ribosomal subunit.

Its function is as follows. Binds to the 23S rRNA. This is Large ribosomal subunit protein uL15 from Bdellovibrio bacteriovorus (strain ATCC 15356 / DSM 50701 / NCIMB 9529 / HD100).